The sequence spans 356 residues: Histidinol-phosphate aminotransferase (356 aa).

Position 214 is an N6-(pyridoxal phosphate)lysine (Lys214).

This sequence belongs to the class-II pyridoxal-phosphate-dependent aminotransferase family. Histidinol-phosphate aminotransferase subfamily. In terms of assembly, homodimer. It depends on pyridoxal 5'-phosphate as a cofactor.

It catalyses the reaction L-histidinol phosphate + 2-oxoglutarate = 3-(imidazol-4-yl)-2-oxopropyl phosphate + L-glutamate. It functions in the pathway amino-acid biosynthesis; L-histidine biosynthesis; L-histidine from 5-phospho-alpha-D-ribose 1-diphosphate: step 7/9. The polypeptide is Histidinol-phosphate aminotransferase (Escherichia fergusonii (strain ATCC 35469 / DSM 13698 / CCUG 18766 / IAM 14443 / JCM 21226 / LMG 7866 / NBRC 102419 / NCTC 12128 / CDC 0568-73)).